The sequence spans 226 residues: Thiamine-phosphate synthase (226 aa).

4-amino-2-methyl-5-(diphosphooxymethyl)pyrimidine-binding positions include 46–50 and Asn-87; that span reads QLRDK. Residues Asp-88 and Asp-107 each contribute to the Mg(2+) site. Residue Ser-126 participates in 4-amino-2-methyl-5-(diphosphooxymethyl)pyrimidine binding. Residue 152-154 coordinates 2-[(2R,5Z)-2-carboxy-4-methylthiazol-5(2H)-ylidene]ethyl phosphate; that stretch reads TPT. Position 155 (Lys-155) interacts with 4-amino-2-methyl-5-(diphosphooxymethyl)pyrimidine. Gly-183 is a binding site for 2-[(2R,5Z)-2-carboxy-4-methylthiazol-5(2H)-ylidene]ethyl phosphate.

The protein belongs to the thiamine-phosphate synthase family. Mg(2+) is required as a cofactor.

The catalysed reaction is 2-[(2R,5Z)-2-carboxy-4-methylthiazol-5(2H)-ylidene]ethyl phosphate + 4-amino-2-methyl-5-(diphosphooxymethyl)pyrimidine + 2 H(+) = thiamine phosphate + CO2 + diphosphate. The enzyme catalyses 2-(2-carboxy-4-methylthiazol-5-yl)ethyl phosphate + 4-amino-2-methyl-5-(diphosphooxymethyl)pyrimidine + 2 H(+) = thiamine phosphate + CO2 + diphosphate. It carries out the reaction 4-methyl-5-(2-phosphooxyethyl)-thiazole + 4-amino-2-methyl-5-(diphosphooxymethyl)pyrimidine + H(+) = thiamine phosphate + diphosphate. It functions in the pathway cofactor biosynthesis; thiamine diphosphate biosynthesis; thiamine phosphate from 4-amino-2-methyl-5-diphosphomethylpyrimidine and 4-methyl-5-(2-phosphoethyl)-thiazole: step 1/1. In terms of biological role, condenses 4-methyl-5-(beta-hydroxyethyl)thiazole monophosphate (THZ-P) and 2-methyl-4-amino-5-hydroxymethyl pyrimidine pyrophosphate (HMP-PP) to form thiamine monophosphate (TMP). This chain is Thiamine-phosphate synthase, found in Mycobacterium sp. (strain KMS).